The chain runs to 354 residues: C-C chemokine receptor type 5 (354 aa).

The Extracellular portion of the chain corresponds to 1–32 (MDFQGSIPTYIYDIDYSMSAPCQKVNVKQIAA). O-linked (GalNAc...) serine glycosylation occurs at S6. Sulfotyrosine occurs at positions 10 and 16. Intrachain disulfides connect C22–C271 and C103–C180. A helical membrane pass occupies residues 33–60 (QLLPPLYSLVFIFGFVGNMMVFLILISC). Topologically, residues 61–70 (KKLKSMTDIY) are cytoplasmic. Residues 71 to 91 (LFNLAISDLLFLLTLPFWAHY) form a helical membrane-spanning segment. The Extracellular portion of the chain corresponds to 92 to 104 (AANEWVFGNIMCK). A helical transmembrane segment spans residues 105–126 (LFTGIYHIGYFGGIFFIILLTI). Over 127-143 (DRYLAIVHAVFAIKART) the chain is Cytoplasmic. A helical membrane pass occupies residues 144-168 (VNFGVITSVVTWVVAVFVSLPEIIF). Residues 169–200 (MRSQKEGSHYTCSPHFLHIQYRFWKHFQTLKM) lie on the Extracellular side of the membrane. The chain crosses the membrane as a helical span at residues 201–220 (VILSLILPLLVMVICYSGIL). Residues 221–237 (NTLFRCRNEKKRHRAVR) are Cytoplasmic-facing. The helical transmembrane segment at 238-262 (LIFAIMIVYFLFWTPYNIVLLLTTF) threads the bilayer. The Extracellular segment spans residues 263 to 279 (QEYFGLNNCSSSNRLDQ). The helical transmembrane segment at 280–303 (AMQVTETLGMTHCCLNPVIYAFVG) threads the bilayer. At 304–354 (EKFRNYLSVFFRKHIVKRFCKHCSIFQQVNPDRVSSVYTRSTGEQEVSTGL) the chain is on the cytoplasmic side. S-palmitoyl cysteine attachment occurs at residues C323 and C326. S338, S339, S344, and S351 each carry phosphoserine; by BARK1.

This sequence belongs to the G-protein coupled receptor 1 family. In terms of assembly, interacts with PRAF2. Efficient ligand binding to CCL3/MIP-1alpha and CCL4/MIP-1beta requires sulfation, O-glycosylation and sialic acid modifications. Glycosylation on Ser-6 is required for efficient binding of CCL4. Interacts with GRK2. Interacts with ARRB1 and ARRB2. Interacts with CNIH4. Interacts with S100A4; this interaction stimulates T-lymphocyte chemotaxis. In terms of processing, sulfated on at least 2 of the N-terminal tyrosines. Sulfation is required for efficient binding of the chemokines, CCL3 and CCL4. Post-translationally, O-glycosylated, but not N-glycosylated. Ser-6 appears to be the major site. Also sialylated glycans present which contribute to chemokine binding. Ser-17 may also be glycosylated and, if so, with small moieties such as a T-antigen. Palmitoylation in the C-terminal is important for cell surface expression. In terms of processing, phosphorylation on serine residues in the C-terminal is stimulated by binding CC chemokines especially by APO-RANTES.

It is found in the cell membrane. Functionally, receptor for a number of inflammatory CC-chemokines including CCL3/MIP-1-alpha, CCL4/MIP-1-beta and RANTES and subsequently transduces a signal by increasing the intracellular calcium ion level. May play a role in the control of granulocytic lineage proliferation or differentiation. Participates in T-lymphocyte migration to the infection site by acting as a chemotactic receptor. This is C-C chemokine receptor type 5 (Ccr5) from Rattus norvegicus (Rat).